The chain runs to 87 residues: Small ribosomal subunit protein eS21 (87 aa).

This sequence belongs to the eukaryotic ribosomal protein eS21 family. As to quaternary structure, component of the small ribosomal subunit. Mature ribosomes consist of a small (40S) and a large (60S) subunit. The 40S subunit contains about 33 different proteins and 1 molecule of RNA (18S). The 60S subunit contains about 49 different proteins and 3 molecules of RNA (25S, 5.8S and 5S).

It localises to the cytoplasm. Required for the processing of the 20S rRNA-precursor to mature 18S rRNA in a late step of the maturation of 40S ribosomal subunits. Has a physiological role leading to 18S rRNA stability. The chain is Small ribosomal subunit protein eS21 (RPS21) from Candida glabrata (strain ATCC 2001 / BCRC 20586 / JCM 3761 / NBRC 0622 / NRRL Y-65 / CBS 138) (Yeast).